The primary structure comprises 340 residues: 4-hydroxythreonine-4-phosphate dehydrogenase (340 aa).

2 residues coordinate substrate: His-141 and Thr-142. Positions 177, 222, and 277 each coordinate a divalent metal cation. Substrate-binding residues include Lys-285, Asn-294, and Arg-303.

The protein belongs to the PdxA family. Homodimer. Requires Zn(2+) as cofactor. Mg(2+) is required as a cofactor. The cofactor is Co(2+).

It is found in the cytoplasm. It carries out the reaction 4-(phosphooxy)-L-threonine + NAD(+) = 3-amino-2-oxopropyl phosphate + CO2 + NADH. It participates in cofactor biosynthesis; pyridoxine 5'-phosphate biosynthesis; pyridoxine 5'-phosphate from D-erythrose 4-phosphate: step 4/5. Its function is as follows. Catalyzes the NAD(P)-dependent oxidation of 4-(phosphooxy)-L-threonine (HTP) into 2-amino-3-oxo-4-(phosphooxy)butyric acid which spontaneously decarboxylates to form 3-amino-2-oxopropyl phosphate (AHAP). The chain is 4-hydroxythreonine-4-phosphate dehydrogenase from Maricaulis maris (strain MCS10) (Caulobacter maris).